Consider the following 602-residue polypeptide: UvrABC system protein C (602 aa).

Positions 17 to 94 constitute a GIY-YIG domain; it reads KTSGCYKMYS…IKKYKPTYNI (78 aa). The region spanning 199–234 is the UVR domain; the sequence is SKLLNDIEIKMKEVIMKENFEAAIKLKETKKSLIEI.

This sequence belongs to the UvrC family. Interacts with UvrB in an incision complex.

Its subcellular location is the cytoplasm. In terms of biological role, the UvrABC repair system catalyzes the recognition and processing of DNA lesions. UvrC both incises the 5' and 3' sides of the lesion. The N-terminal half is responsible for the 3' incision and the C-terminal half is responsible for the 5' incision. The chain is UvrABC system protein C from Borrelia duttonii (strain Ly).